Reading from the N-terminus, the 217-residue chain is MICKDDHSTLRARFRGFYPVVVDVETAGLDANINALLEIAVATFKMDEYGWLCVDGSLNFHIKSFPGAIIQPESLAFNGIDLNSPLRAAVTEQEALHEIFEMVRQGIKTQGCSRAIIVAHNAFFDHSFLMAAVERVSFMEKNPFHPFVMFDTATLSGLVFGQTVLAKACACAGVFFDKNKAHSALYDTERTAMLFCELVNKWKRLGGWPLTPCCIES.

The Exonuclease domain occupies V20–F195. 4 residues coordinate Mg(2+): D23, E25, H182, and D187. Catalysis depends on H182, which acts as the Proton donor/acceptor.

This sequence belongs to the RNase T family. As to quaternary structure, homodimer. Requires Mg(2+) as cofactor.

Trims short 3' overhangs of a variety of RNA species, leaving a one or two nucleotide 3' overhang. Responsible for the end-turnover of tRNA: specifically removes the terminal AMP residue from uncharged tRNA (tRNA-C-C-A). Also appears to be involved in tRNA biosynthesis. The polypeptide is Ribonuclease T (Blochmanniella pennsylvanica (strain BPEN)).